We begin with the raw amino-acid sequence, 204 residues long: DNA-directed RNA polymerase III subunit RPC8 (204 aa).

Residues 158-178 (VDTSPTGPSSAEAASSSEELP) form a disordered region. A compositionally biased stretch (low complexity) spans 166 to 175 (SSAEAASSSE).

This sequence belongs to the eukaryotic RPB7/RPC8 RNA polymerase subunit family. Component of the RNA polymerase III complex consisting of 17 subunits: a ten-subunit horseshoe-shaped catalytic core composed of POLR3A/RPC1, POLR3B/RPC2, POLR1C/RPAC1, POLR1D/RPAC2, POLR3K/RPC10, POLR2E/RPABC1, POLR2F/RPABC2, POLR2H/RPABC3, POLR2K/RPABC4 and POLR2L/RPABC5; a mobile stalk composed of two subunits POLR3H/RPC8 and CRCP/RPC9, protruding from the core and functioning primarily in transcription initiation; and additional subunits homologous to general transcription factors of the RNA polymerase II machinery, POLR3C/RPC3-POLR3F/RPC6-POLR3G/RPC7 heterotrimer required for transcription initiation and POLR3D/RPC4-POLR3E/RPC5 heterodimer involved in both transcription initiation and termination. Interacts with CRCP/RPC9. POLR3H/RPC8 and CRCP/RPC9 probably form a Pol III subcomplex.

Its subcellular location is the nucleus. Functionally, DNA-dependent RNA polymerase catalyzes the transcription of DNA into RNA using the four ribonucleoside triphosphates as substrates. Specific peripheric component of RNA polymerase III (Pol III) which synthesizes small non-coding RNAs including 5S rRNA, snRNAs, tRNAs and miRNAs from at least 500 distinct genomic loci. With CRCP/RPC9 forms a mobile stalk that protrudes from Pol III core and functions primarily in transcription initiation. Pol III plays a key role in sensing and limiting infection by intracellular bacteria and DNA viruses. Acts as nuclear and cytosolic DNA sensor involved in innate immune response. Can sense non-self dsDNA that serves as template for transcription into dsRNA. The non-self RNA polymerase III transcripts, such as Epstein-Barr virus-encoded RNAs (EBERs) induce type I interferon and NF-kappa-B through the RIG-I pathway. The sequence is that of DNA-directed RNA polymerase III subunit RPC8 (POLR3H) from Bos taurus (Bovine).